Consider the following 148-residue polypeptide: UPF0756 membrane protein YeaL (148 aa).

The next 4 helical transmembrane spans lie at 14 to 34 (ALGF…LIIV), 51 to 71 (LSIG…SGTL), 86 to 106 (LVAI…VTLM), and 121 to 141 (VLGV…AGLV).

Belongs to the UPF0756 family.

Its subcellular location is the cell membrane. This is UPF0756 membrane protein YeaL from Escherichia coli O127:H6 (strain E2348/69 / EPEC).